The primary structure comprises 235 residues: Leucyl/phenylalanyl-tRNA--protein transferase (235 aa).

The protein belongs to the L/F-transferase family.

It is found in the cytoplasm. The enzyme catalyses N-terminal L-lysyl-[protein] + L-leucyl-tRNA(Leu) = N-terminal L-leucyl-L-lysyl-[protein] + tRNA(Leu) + H(+). The catalysed reaction is N-terminal L-arginyl-[protein] + L-leucyl-tRNA(Leu) = N-terminal L-leucyl-L-arginyl-[protein] + tRNA(Leu) + H(+). It catalyses the reaction L-phenylalanyl-tRNA(Phe) + an N-terminal L-alpha-aminoacyl-[protein] = an N-terminal L-phenylalanyl-L-alpha-aminoacyl-[protein] + tRNA(Phe). Functionally, functions in the N-end rule pathway of protein degradation where it conjugates Leu, Phe and, less efficiently, Met from aminoacyl-tRNAs to the N-termini of proteins containing an N-terminal arginine or lysine. The protein is Leucyl/phenylalanyl-tRNA--protein transferase of Anaeromyxobacter sp. (strain Fw109-5).